The sequence spans 523 residues: Light-independent protochlorophyllide reductase subunit B (523 aa).

Aspartate 36 is a [4Fe-4S] cluster binding site. The Proton donor role is filled by aspartate 290. Glycine 425–leucine 426 contacts substrate.

Belongs to the ChlB/BchB/BchZ family. In terms of assembly, protochlorophyllide reductase is composed of three subunits; ChlL, ChlN and ChlB. Forms a heterotetramer of two ChlB and two ChlN subunits. [4Fe-4S] cluster serves as cofactor.

It catalyses the reaction chlorophyllide a + oxidized 2[4Fe-4S]-[ferredoxin] + 2 ADP + 2 phosphate = protochlorophyllide a + reduced 2[4Fe-4S]-[ferredoxin] + 2 ATP + 2 H2O. The protein operates within porphyrin-containing compound metabolism; chlorophyll biosynthesis (light-independent). Its function is as follows. Component of the dark-operative protochlorophyllide reductase (DPOR) that uses Mg-ATP and reduced ferredoxin to reduce ring D of protochlorophyllide (Pchlide) to form chlorophyllide a (Chlide). This reaction is light-independent. The NB-protein (ChlN-ChlB) is the catalytic component of the complex. This is Light-independent protochlorophyllide reductase subunit B from Prochlorococcus marinus (strain MIT 9215).